Reading from the N-terminus, the 721-residue chain is Glucans biosynthesis glucosyltransferase H (721 aa).

7 helical membrane-spanning segments follow: residues 54-74 (LIMV…YQVL), 85-105 (VVLV…VSAL), 404-424 (GIGA…GILI), 458-478 (FAGT…LVLI), 493-513 (FGGV…MMVF), 548-568 (YALP…VSWP), and 569-589 (LLLW…VALL).

This sequence belongs to the glycosyltransferase 2 family. OpgH subfamily.

The protein resides in the cell inner membrane. The protein operates within glycan metabolism; osmoregulated periplasmic glucan (OPG) biosynthesis. Involved in the biosynthesis of osmoregulated periplasmic glucans (OPGs). In Rhodopseudomonas palustris (strain TIE-1), this protein is Glucans biosynthesis glucosyltransferase H.